The following is a 284-amino-acid chain: Diaminopimelate epimerase (284 aa).

Asn-14 and Asn-67 together coordinate substrate. Cys-76 acts as the Proton donor in catalysis. Residues 77 to 78 (GN), Asn-166, Asn-199, and 217 to 218 (ER) contribute to the substrate site. Cys-226 acts as the Proton acceptor in catalysis. 227-228 (GT) contributes to the substrate binding site.

Belongs to the diaminopimelate epimerase family. Homodimer.

Its subcellular location is the cytoplasm. The catalysed reaction is (2S,6S)-2,6-diaminopimelate = meso-2,6-diaminopimelate. It participates in amino-acid biosynthesis; L-lysine biosynthesis via DAP pathway; DL-2,6-diaminopimelate from LL-2,6-diaminopimelate: step 1/1. Its function is as follows. Catalyzes the stereoinversion of LL-2,6-diaminopimelate (L,L-DAP) to meso-diaminopimelate (meso-DAP), a precursor of L-lysine and an essential component of the bacterial peptidoglycan. This chain is Diaminopimelate epimerase, found in Bacillus subtilis (strain 168).